The chain runs to 250 residues: tRNA (guanine-N(1)-)-methyltransferase (250 aa).

Residues glycine 113 and 134 to 139 each bind S-adenosyl-L-methionine; that span reads IGDYVL.

This sequence belongs to the RNA methyltransferase TrmD family. As to quaternary structure, homodimer.

It is found in the cytoplasm. It carries out the reaction guanosine(37) in tRNA + S-adenosyl-L-methionine = N(1)-methylguanosine(37) in tRNA + S-adenosyl-L-homocysteine + H(+). Functionally, specifically methylates guanosine-37 in various tRNAs. This chain is tRNA (guanine-N(1)-)-methyltransferase, found in Buchnera aphidicola subsp. Baizongia pistaciae (strain Bp).